Consider the following 358-residue polypeptide: Peptide chain release factor 1 (358 aa).

N5-methylglutamine is present on Gln-234.

This sequence belongs to the prokaryotic/mitochondrial release factor family. Post-translationally, methylated by PrmC. Methylation increases the termination efficiency of RF1.

The protein localises to the cytoplasm. In terms of biological role, peptide chain release factor 1 directs the termination of translation in response to the peptide chain termination codons UAG and UAA. This is Peptide chain release factor 1 from Chloroherpeton thalassium (strain ATCC 35110 / GB-78).